A 273-amino-acid polypeptide reads, in one-letter code: Ribosomal RNA small subunit methyltransferase I (273 aa).

This sequence belongs to the methyltransferase superfamily. RsmI family.

Its subcellular location is the cytoplasm. It carries out the reaction cytidine(1402) in 16S rRNA + S-adenosyl-L-methionine = 2'-O-methylcytidine(1402) in 16S rRNA + S-adenosyl-L-homocysteine + H(+). In terms of biological role, catalyzes the 2'-O-methylation of the ribose of cytidine 1402 (C1402) in 16S rRNA. This Xylella fastidiosa (strain Temecula1 / ATCC 700964) protein is Ribosomal RNA small subunit methyltransferase I.